The following is a 129-amino-acid chain: Glycine cleavage system H protein (129 aa).

The region spanning 24-106 (SVVVGVTQHA…YGAGWIVEIE (83 aa)) is the Lipoyl-binding domain. Lys65 bears the N6-lipoyllysine mark.

This sequence belongs to the GcvH family. The glycine cleavage system is composed of four proteins: P, T, L and H. The cofactor is (R)-lipoate.

In terms of biological role, the glycine cleavage system catalyzes the degradation of glycine. The H protein shuttles the methylamine group of glycine from the P protein to the T protein. The protein is Glycine cleavage system H protein of Myxococcus xanthus (strain DK1622).